The sequence spans 1331 residues: X-linked retinitis pigmentosa GTPase regulator-interacting protein 1 (1331 aa).

3 disordered regions span residues 1-165 (MQHL…PPAF), 183-220 (SQLT…SEEC), and 351-374 (HQPL…LPPQ). Over residues 41 to 67 (NQKELNCRRLHLHEEPTLVKEPSPKQR) the composition is skewed to basic and acidic residues. 2 stretches are compositionally biased toward polar residues: residues 77-86 (VQRSTTTQPD) and 183-193 (SQLTHTMTTDS). Positions 194 to 220 (THVEEIPRSPEKTSKVEKPEQRSSEEC) are enriched in basic and acidic residues. 2 coiled-coil regions span residues 236 to 352 (ELIR…SSHQ) and 498 to 546 (MCYQ…LRSH). The segment covering 351–367 (HQPLDSSHQPHWSTELT) has biased composition (polar residues). Residues 745 to 870 (GARKVQSNES…AQNKSIKGDF (126 aa)) enclose the C2 domain. 2 disordered regions span residues 899–1057 (FQMS…VQDK) and 1088–1146 (AEDG…SDDI). The stretch at 908 to 999 (EGEEKEEEGG…DVLEASFTEE (92 aa)) forms a coiled coil. Over residues 910–988 (EEKEEEGGEE…EEEEEEEDEN (79 aa)) the composition is skewed to acidic residues. 2 stretches are compositionally biased toward basic and acidic residues: residues 1022-1039 (PEKR…REHQ) and 1088-1115 (AEDG…EHPS). Residues 1129–1141 (CEQASEVSETQTT) show a composition bias toward polar residues. The interval 1136 to 1326 (SETQTTDSDD…ALHGIYKEMT (191 aa)) is interaction with RPGR.

This sequence belongs to the RPGRIP1 family. As to quaternary structure, interacts with NPHP4. Interacts with NEK4. Forms homodimers and elongated homopolymers. Interacts with RPGR. Interacts with SPATA7. Interacts with CEP290/NPHP6; mediating the association between RPGR and CEP290/NPHP6. In terms of tissue distribution, expressed in the retina (at protein level).

It is found in the cell projection. Its subcellular location is the cilium. In terms of biological role, may function as scaffolding protein. Required for normal location of RPGR at the connecting cilium of photoreceptor cells. Required for normal disk morphogenesis and disk organization in the outer segment of photoreceptor cells and for survival of photoreceptor cells. This chain is X-linked retinitis pigmentosa GTPase regulator-interacting protein 1 (Rpgrip1), found in Mus musculus (Mouse).